A 276-amino-acid polypeptide reads, in one-letter code: Palmitoyltransferase ZDHHC22 (276 aa).

Topologically, residues 1 to 9 are cytoplasmic; the sequence is MGKLKLLNT. Residues 10–30 traverse the membrane as a helical segment; it reads IAPAYFYAATVVTFALHFLLF. Over 31 to 45 the chain is Lumenal; the sequence is TPTIFQSSDVTINPA. Residues 46–66 form a helical membrane-spanning segment; it reads MLAHISIFLFLMGNALGNYIM. The Cytoplasmic portion of the chain corresponds to 67–131; that stretch reads TIRNPSESAN…NCIGNRNMRY (65 aa). Positions 101-137 constitute a DHHC domain; it reads HFCKVCKKVILKRDHHCFFTGNCIGNRNMRYFIMFSI. The S-palmitoyl cysteine intermediate role is filled by cysteine 117. Residues 132 to 152 traverse the membrane as a helical segment; sequence FIMFSIYTSSSCLYSLVIGVA. Residues 153–165 lie on the Lumenal side of the membrane; that stretch reads YLTIEYSISFENP. Residues 166–186 form a helical membrane-spanning segment; sequence LTFLTLLPLSTGYFFLGLISG. At 187-188 the chain is on the cytoplasmic side; sequence LQ. A helical membrane pass occupies residues 189-209; it reads FFLVIMLYIWLGIGLVSVGFC. Topologically, residues 210–276 are lumenal; sequence CQQLLLVARG…WQVYHDHKHD (67 aa).

The protein belongs to the DHHC palmitoyltransferase family.

It is found in the endoplasmic reticulum membrane. The protein localises to the golgi apparatus membrane. It catalyses the reaction L-cysteinyl-[protein] + hexadecanoyl-CoA = S-hexadecanoyl-L-cysteinyl-[protein] + CoA. Palmitoyltransferase that could catalyze the addition of palmitate onto various protein substrates and be involved in a variety of cellular processes. The polypeptide is Palmitoyltransferase ZDHHC22 (zdhhc22) (Danio rerio (Zebrafish)).